A 322-amino-acid polypeptide reads, in one-letter code: Phosphatidylserine decarboxylase proenzyme (322 aa).

Residues Asp90, His147, and Ser254 each act as charge relay system; for autoendoproteolytic cleavage activity in the active site. Ser254 serves as the catalytic Schiff-base intermediate with substrate; via pyruvic acid; for decarboxylase activity. A Pyruvic acid (Ser); by autocatalysis modification is found at Ser254. Positions 293 to 322 (PDAEPAPLPAEEIEAEHDASPLVDDKKDQV) are disordered. Basic and acidic residues predominate over residues 308–322 (EHDASPLVDDKKDQV).

It belongs to the phosphatidylserine decarboxylase family. PSD-B subfamily. Prokaryotic type I sub-subfamily. Heterodimer of a large membrane-associated beta subunit and a small pyruvoyl-containing alpha subunit. Requires pyruvate as cofactor. Post-translationally, is synthesized initially as an inactive proenzyme. Formation of the active enzyme involves a self-maturation process in which the active site pyruvoyl group is generated from an internal serine residue via an autocatalytic post-translational modification. Two non-identical subunits are generated from the proenzyme in this reaction, and the pyruvate is formed at the N-terminus of the alpha chain, which is derived from the carboxyl end of the proenzyme. The autoendoproteolytic cleavage occurs by a canonical serine protease mechanism, in which the side chain hydroxyl group of the serine supplies its oxygen atom to form the C-terminus of the beta chain, while the remainder of the serine residue undergoes an oxidative deamination to produce ammonia and the pyruvoyl prosthetic group on the alpha chain. During this reaction, the Ser that is part of the protease active site of the proenzyme becomes the pyruvoyl prosthetic group, which constitutes an essential element of the active site of the mature decarboxylase.

The protein localises to the cell membrane. The catalysed reaction is a 1,2-diacyl-sn-glycero-3-phospho-L-serine + H(+) = a 1,2-diacyl-sn-glycero-3-phosphoethanolamine + CO2. The protein operates within phospholipid metabolism; phosphatidylethanolamine biosynthesis; phosphatidylethanolamine from CDP-diacylglycerol: step 2/2. Functionally, catalyzes the formation of phosphatidylethanolamine (PtdEtn) from phosphatidylserine (PtdSer). In Escherichia coli O9:H4 (strain HS), this protein is Phosphatidylserine decarboxylase proenzyme.